The following is an 86-amino-acid chain: UPF0297 protein SAHV_1604 (86 aa).

The protein belongs to the UPF0297 family.

The protein is UPF0297 protein SAHV_1604 of Staphylococcus aureus (strain Mu3 / ATCC 700698).